We begin with the raw amino-acid sequence, 196 residues long: PRADC1-like protein (196 aa).

A signal peptide spans 1–18 (MLIAWLVLAATLSRSIRA). A PA domain is found at 73-171 (ITDPPGACQE…STLQRLKRVH (99 aa)). The N-linked (GlcNAc...) asparagine glycan is linked to N179.

The protein localises to the secreted. Functionally, may be involved in iversification of muscle cell fates. The chain is PRADC1-like protein from Drosophila melanogaster (Fruit fly).